Reading from the N-terminus, the 204-residue chain is Pyrrolidone-carboxylate peptidase (204 aa).

Catalysis depends on residues Glu-80, Cys-142, and His-165.

It belongs to the peptidase C15 family. Homotetramer.

Its subcellular location is the cytoplasm. It carries out the reaction Release of an N-terminal pyroglutamyl group from a polypeptide, the second amino acid generally not being Pro.. Removes 5-oxoproline from various penultimate amino acid residues except L-proline. The sequence is that of Pyrrolidone-carboxylate peptidase from Lysinibacillus sphaericus (strain C3-41).